Here is a 331-residue protein sequence, read N- to C-terminus: Ornithine carbamoyltransferase (331 aa).

Residues 55–58 (STRT), Q82, R106, and 133–136 (HPTQ) each bind carbamoyl phosphate. L-ornithine is bound by residues N166, D230, and 234–235 (SM). Carbamoyl phosphate-binding positions include 272–273 (CL) and R317.

It belongs to the aspartate/ornithine carbamoyltransferase superfamily. OTCase family.

It localises to the cytoplasm. It carries out the reaction carbamoyl phosphate + L-ornithine = L-citrulline + phosphate + H(+). The protein operates within amino-acid biosynthesis; L-arginine biosynthesis; L-arginine from L-ornithine and carbamoyl phosphate: step 1/3. In terms of biological role, reversibly catalyzes the transfer of the carbamoyl group from carbamoyl phosphate (CP) to the N(epsilon) atom of ornithine (ORN) to produce L-citrulline. This Neisseria meningitidis serogroup C / serotype 2a (strain ATCC 700532 / DSM 15464 / FAM18) protein is Ornithine carbamoyltransferase.